Reading from the N-terminus, the 87-residue chain is Acetolactate synthase isozyme 2 small subunit (87 aa).

The ACT domain maps to 5–78 (QVNVSARFNP…DVAHVAICQS (74 aa)).

Tetramer of two large and two small chains. The cofactor is Mg(2+). Thiamine diphosphate is required as a cofactor.

It carries out the reaction 2 pyruvate + H(+) = (2S)-2-acetolactate + CO2. The protein operates within amino-acid biosynthesis; L-isoleucine biosynthesis; L-isoleucine from 2-oxobutanoate: step 1/4. Its pathway is amino-acid biosynthesis; L-valine biosynthesis; L-valine from pyruvate: step 1/4. This is Acetolactate synthase isozyme 2 small subunit (ilvM) from Escherichia coli O6:H1 (strain CFT073 / ATCC 700928 / UPEC).